The sequence spans 101 residues: Citrinin resistance protein, mitochondrial (101 aa).

The protein resides in the mitochondrion. Functionally, mitochondrial protein that is involved in citrinin resistance. In Saccharomyces cerevisiae (strain ATCC 204508 / S288c) (Baker's yeast), this protein is Citrinin resistance protein, mitochondrial.